Here is a 253-residue protein sequence, read N- to C-terminus: Sulfate transporter CysZ (253 aa).

A run of 4 helical transmembrane segments spans residues 31 to 51 (FVIL…WWLF), 75 to 95 (LLWP…FSTI), 151 to 171 (IVLL…PVLW), and 222 to 242 (IPVL…AMWV).

Belongs to the CysZ family.

The protein localises to the cell inner membrane. In terms of biological role, high affinity, high specificity proton-dependent sulfate transporter, which mediates sulfate uptake. Provides the sulfur source for the cysteine synthesis pathway. This is Sulfate transporter CysZ from Citrobacter koseri (strain ATCC BAA-895 / CDC 4225-83 / SGSC4696).